We begin with the raw amino-acid sequence, 191 residues long: Auxin-responsive protein IAA32 (191 aa).

An EAR-like (transcriptional repression) motif is present at residues 32 to 36 (LGLSL). A PB1 domain is found at 98 to 184 (YAYVKVNLDG…SVDRMRIARR (87 aa)).

The protein belongs to the Aux/IAA family. Homodimers and heterodimers.

The protein localises to the nucleus. Its function is as follows. Aux/IAA proteins are short-lived transcriptional factors that function as repressors of early auxin response genes at low auxin concentrations. Repression is thought to result from the interaction with auxin response factors (ARFs), proteins that bind to the auxin-responsive promoter element (AuxRE). Formation of heterodimers with ARF proteins may alter their ability to modulate early auxin response genes expression. The sequence is that of Auxin-responsive protein IAA32 from Arabidopsis thaliana (Mouse-ear cress).